A 250-amino-acid chain; its full sequence is ATP synthase subunit b 2 (250 aa).

A helical transmembrane segment spans residues 2–22 (LIDWFTVFAQILNFVILLGLL).

Belongs to the ATPase B chain family. F-type ATPases have 2 components, F(1) - the catalytic core - and F(0) - the membrane proton channel. F(1) has five subunits: alpha(3), beta(3), gamma(1), delta(1), epsilon(1). F(0) has four main subunits: a(1), b(1), b'(1) and c(10-14). The alpha and beta chains form an alternating ring which encloses part of the gamma chain. F(1) is attached to F(0) by a central stalk formed by the gamma and epsilon chains, while a peripheral stalk is formed by the delta, b and b' chains.

Its subcellular location is the cellular thylakoid membrane. Functionally, f(1)F(0) ATP synthase produces ATP from ADP in the presence of a proton or sodium gradient. F-type ATPases consist of two structural domains, F(1) containing the extramembraneous catalytic core and F(0) containing the membrane proton channel, linked together by a central stalk and a peripheral stalk. During catalysis, ATP synthesis in the catalytic domain of F(1) is coupled via a rotary mechanism of the central stalk subunits to proton translocation. Its function is as follows. Component of the F(0) channel, it forms part of the peripheral stalk, linking F(1) to F(0). This Picosynechococcus sp. (strain ATCC 27264 / PCC 7002 / PR-6) (Agmenellum quadruplicatum) protein is ATP synthase subunit b 2.